We begin with the raw amino-acid sequence, 103 residues long: MYAVIKTGGKQYKVAVGEKLKVEQIPADIDAEITLDQVLAVGEGESIKFGTPLVSGASVKATVVSQGRHKKVTIFKMRRRKHYQKHGGHRQNYTELRIDAINA.

Belongs to the bacterial ribosomal protein bL21 family. In terms of assembly, part of the 50S ribosomal subunit. Contacts protein L20.

Its function is as follows. This protein binds to 23S rRNA in the presence of protein L20. In Paraburkholderia phymatum (strain DSM 17167 / CIP 108236 / LMG 21445 / STM815) (Burkholderia phymatum), this protein is Large ribosomal subunit protein bL21.